A 289-amino-acid chain; its full sequence is Protease HtpX homolog (289 aa).

2 helical membrane-spanning segments follow: residues 11 to 31 (AALF…IAAG) and 34 to 54 (STTP…YGYW). His138 contacts Zn(2+). Residue Glu139 is part of the active site. His142 lines the Zn(2+) pocket. The next 2 helical transmembrane spans lie at 152–172 (SVVA…LIFG) and 182–202 (LATI…QMAI). Glu207 is a binding site for Zn(2+).

This sequence belongs to the peptidase M48B family. It depends on Zn(2+) as a cofactor.

The protein localises to the cell membrane. In Paenarthrobacter aurescens (strain TC1), this protein is Protease HtpX homolog.